The chain runs to 27 residues: uncharacterized protein (27 aa).

It localises to the plastid. It is found in the cyanelle. This is an uncharacterized protein from Cyanophora paradoxa.